Consider the following 2291-residue polypeptide: Protein Ycf2 B (2291 aa).

1642–1649 (GSIGTGRS) is a binding site for ATP.

This sequence belongs to the Ycf2 family.

It is found in the plastid. The protein localises to the chloroplast stroma. Functionally, probable ATPase of unknown function. Its presence in a non-photosynthetic plant (Epifagus virginiana) and experiments in tobacco indicate that it has an essential function which is probably not related to photosynthesis. The polypeptide is Protein Ycf2 B (ycf2-B) (Atropa belladonna (Belladonna)).